Consider the following 325-residue polypeptide: Nod factor export ATP-binding protein I (325 aa).

The ABC transporter domain occupies 27 to 257; it reads LELRKVRKQY…QIGCDVVEVY (231 aa). 59–66 is a binding site for ATP; it reads GPNGAGKT.

This sequence belongs to the ABC transporter superfamily. Lipooligosaccharide exporter (TC 3.A.1.102) family. As to quaternary structure, the complex is composed of two ATP-binding proteins (NodI) and two transmembrane proteins (NodJ).

It localises to the cell inner membrane. In terms of biological role, part of the ABC transporter complex NodIJ involved in the export of the nodulation factors (Nod factors), the bacterial signal molecules that induce symbiosis and subsequent nodulation induction. Nod factors are LCO (lipo-chitin oligosaccharide), a modified beta-1,4-linked N-acetylglucosamine oligosaccharide. This subunit is responsible for energy coupling to the transport system. This chain is Nod factor export ATP-binding protein I, found in Cupriavidus pinatubonensis (strain JMP 134 / LMG 1197) (Cupriavidus necator (strain JMP 134)).